Consider the following 163-residue polypeptide: 3-hydroxyacyl-[acyl-carrier-protein] dehydratase FabZ (163 aa).

His-61 is a catalytic residue.

The protein belongs to the thioester dehydratase family. FabZ subfamily.

The protein resides in the cytoplasm. It carries out the reaction a (3R)-hydroxyacyl-[ACP] = a (2E)-enoyl-[ACP] + H2O. Involved in unsaturated fatty acids biosynthesis. Catalyzes the dehydration of short chain beta-hydroxyacyl-ACPs and long chain saturated and unsaturated beta-hydroxyacyl-ACPs. This is 3-hydroxyacyl-[acyl-carrier-protein] dehydratase FabZ from Dinoroseobacter shibae (strain DSM 16493 / NCIMB 14021 / DFL 12).